The following is a 311-amino-acid chain: Bifunctional protein FolD (311 aa).

Residues 184–186, isoleucine 209, and isoleucine 250 contribute to the NADP(+) site; that span reads GAS.

It belongs to the tetrahydrofolate dehydrogenase/cyclohydrolase family. Homodimer.

It carries out the reaction (6R)-5,10-methylene-5,6,7,8-tetrahydrofolate + NADP(+) = (6R)-5,10-methenyltetrahydrofolate + NADPH. It catalyses the reaction (6R)-5,10-methenyltetrahydrofolate + H2O = (6R)-10-formyltetrahydrofolate + H(+). It participates in one-carbon metabolism; tetrahydrofolate interconversion. Functionally, catalyzes the oxidation of 5,10-methylenetetrahydrofolate to 5,10-methenyltetrahydrofolate and then the hydrolysis of 5,10-methenyltetrahydrofolate to 10-formyltetrahydrofolate. In Gluconacetobacter diazotrophicus (strain ATCC 49037 / DSM 5601 / CCUG 37298 / CIP 103539 / LMG 7603 / PAl5), this protein is Bifunctional protein FolD.